The following is a 408-amino-acid chain: Glutamate N-acetyltransferase (408 aa).

The substrate site is built by threonine 150, lysine 176, threonine 189, glutamate 271, asparagine 403, and threonine 408. The Nucleophile role is filled by threonine 189.

It belongs to the ArgJ family. As to quaternary structure, heterotetramer of two alpha and two beta chains.

Its subcellular location is the cytoplasm. The catalysed reaction is N(2)-acetyl-L-ornithine + L-glutamate = N-acetyl-L-glutamate + L-ornithine. Its pathway is amino-acid biosynthesis; L-arginine biosynthesis; L-ornithine and N-acetyl-L-glutamate from L-glutamate and N(2)-acetyl-L-ornithine (cyclic): step 1/1. Functionally, catalyzes the transfer of the acetyl group from N(2)-acetylornithine to glutamate, forming N-acetylglutamate and L-ornithine. This chain is Glutamate N-acetyltransferase, found in Methanococcus maripaludis (strain DSM 14266 / JCM 13030 / NBRC 101832 / S2 / LL).